We begin with the raw amino-acid sequence, 552 residues long: uncharacterized protein (552 aa).

Belongs to the transposase 25 family.

This is an uncharacterized protein from Sinorhizobium fredii (strain NBRC 101917 / NGR234).